Here is a 367-residue protein sequence, read N- to C-terminus: Zinc metalloproteinase nas-22 (367 aa).

An N-terminal signal peptide occupies residues 1-16; that stretch reads MKSFFILLSILQECYG. The region spanning 41 to 237 is the Peptidase M12A domain; it reads VLIRGSDEER…LMINKYYECS (197 aa). Asn56 and Asn85 each carry an N-linked (GlcNAc...) asparagine glycan. Cystine bridges form between Cys88–Cys236, Cys111–Cys130, Cys238–Cys258, and Cys260–Cys269. Residue His138 coordinates Zn(2+). The active site involves Glu139. Zn(2+)-binding residues include His142 and His148. N-linked (GlcNAc...) asparagine glycans are attached at residues Asn169, Asn241, and Asn254. The 39-residue stretch at 232 to 270 folds into the EGF-like domain; that stretch reads KYYECSCANNLSCKNHGYPNPSNCSQCNCPYGFGGADCS. N-linked (GlcNAc...) asparagine glycans are attached at residues Asn287 and Asn322.

Requires Zn(2+) as cofactor. As to expression, expressed in uterine seam (utse) cell.

It is found in the secreted. Its function is as follows. Metalloprotease. The sequence is that of Zinc metalloproteinase nas-22 (nas-22) from Caenorhabditis elegans.